Consider the following 323-residue polypeptide: tRNA-dihydrouridine synthase B (323 aa).

FMN contacts are provided by residues 16 to 18 (PMA) and Gln-70. Cys-100 functions as the Proton donor in the catalytic mechanism. Residues Lys-139, 200-202 (NGD), and 224-225 (GR) contribute to the FMN site.

The protein belongs to the Dus family. DusB subfamily. The cofactor is FMN.

The enzyme catalyses a 5,6-dihydrouridine in tRNA + NAD(+) = a uridine in tRNA + NADH + H(+). It carries out the reaction a 5,6-dihydrouridine in tRNA + NADP(+) = a uridine in tRNA + NADPH + H(+). Functionally, catalyzes the synthesis of 5,6-dihydrouridine (D), a modified base found in the D-loop of most tRNAs, via the reduction of the C5-C6 double bond in target uridines. In Proteus vulgaris, this protein is tRNA-dihydrouridine synthase B.